A 71-amino-acid polypeptide reads, in one-letter code: Small ribosomal subunit protein bS21 (71 aa).

A compositionally biased stretch (basic residues) spans 49-59; the sequence is AAAAVKRHAKK. A disordered region spans residues 49 to 71; that stretch reads AAAAVKRHAKKVQREQRRSVRLY. The segment covering 60-71 has biased composition (basic and acidic residues); the sequence is VQREQRRSVRLY.

The protein belongs to the bacterial ribosomal protein bS21 family.

The polypeptide is Small ribosomal subunit protein bS21 (Stutzerimonas stutzeri (strain A1501) (Pseudomonas stutzeri)).